Here is a 488-residue protein sequence, read N- to C-terminus: Cobyric acid synthase (488 aa).

The GATase cobBQ-type domain maps to 252-440 (VPLIAVLRFP…VHGLFANDRQ (189 aa)). Cysteine 334 serves as the catalytic Nucleophile. Residue histidine 432 is part of the active site.

Belongs to the CobB/CobQ family. CobQ subfamily.

Its pathway is cofactor biosynthesis; adenosylcobalamin biosynthesis. Catalyzes amidations at positions B, D, E, and G on adenosylcobyrinic A,C-diamide. NH(2) groups are provided by glutamine, and one molecule of ATP is hydrogenolyzed for each amidation. This Methylorubrum populi (strain ATCC BAA-705 / NCIMB 13946 / BJ001) (Methylobacterium populi) protein is Cobyric acid synthase.